Consider the following 518-residue polypeptide: Protein FAM98A (518 aa).

Disordered regions lie at residues 300–415 and 434–518; these read GRVP…GHSS and GSGY…HYTS. A compositionally biased stretch (basic and acidic residues) spans 302-311; sequence VPDRGGRPNE. 3 stretches are compositionally biased toward gly residues: residues 349 to 364, 383 to 396, and 405 to 415; these read GGRG…GGRG, WTDG…GYQD, and QPGGYHGGHSS. Residues 447–459 are compositionally biased toward basic and acidic residues; that stretch reads RYQDGGHHGDRGG. Gly residues predominate over residues 460-484; it reads GRGGRGGRGGRGGRAGQGGGWGGRG. Positions 488–504 are enriched in low complexity; that stretch reads YHQGGQFEQHFQHGGYQ. The segment covering 505–518 has biased composition (polar residues); the sequence is YNHSGFGQGRHYTS.

Belongs to the FAM98 family. As to quaternary structure, interacts (via N- and C-terminus) with DDX1. Interacts (via N- and C-terminus) with C14orf166. Interacts with FAM98B. Interacts with PLEKHM1 (via N- and C-terminus).

Functionally, positively stimulates PRMT1-induced protein arginine methylation. Involved in skeletal homeostasis. Positively regulates lysosome peripheral distribution and ruffled border formation in osteoclasts. The protein is Protein FAM98A of Pongo abelii (Sumatran orangutan).